A 107-amino-acid polypeptide reads, in one-letter code: Nucleoid-associated protein A1I_00660 (107 aa).

Residues 81-107 form a disordered region; the sequence is KCDSDSQNSMSGALSGMSLPPGFKMPF.

The protein belongs to the YbaB/EbfC family. Homodimer.

It is found in the cytoplasm. The protein localises to the nucleoid. Its function is as follows. Binds to DNA and alters its conformation. May be involved in regulation of gene expression, nucleoid organization and DNA protection. This chain is Nucleoid-associated protein A1I_00660, found in Rickettsia bellii (strain OSU 85-389).